Consider the following 229-residue polypeptide: Meiotically up-regulated gene 31 protein (229 aa).

2 disordered regions span residues 16-68 (EDSA…EEDK) and 189-229 (GLPE…TTWA).

Its subcellular location is the endoplasmic reticulum. Its function is as follows. Has a role in meiosis. The polypeptide is Meiotically up-regulated gene 31 protein (mug31) (Schizosaccharomyces pombe (strain 972 / ATCC 24843) (Fission yeast)).